Here is a 514-residue protein sequence, read N- to C-terminus: Adenylosuccinate synthetase 2, chloroplastic (514 aa).

The transit peptide at 1–56 (MAMAAAAAVASQGLLATSSQQQKKSSAKLICNAATFFSGKRLLWVKSCNNGAVGLR) directs the protein to the chloroplast. Residues 100 to 106 (GDEGKGK) and 128 to 130 (GHT) each bind GTP. Asp101 (proton acceptor) is an active-site residue. Positions 101 and 128 each coordinate Mg(2+). Residues 101–104 (DEGK), 126–129 (NAGH), Thr218, Arg232, Gln312, Thr327, and Arg391 each bind IMP. His129 functions as the Proton donor in the catalytic mechanism. 387 to 393 (TTTGRPR) provides a ligand contact to substrate. GTP-binding positions include Arg393, 419–421 (KLD), and 502–504 (GVG).

It belongs to the adenylosuccinate synthetase family. As to quaternary structure, homodimer. Requires Mg(2+) as cofactor.

Its subcellular location is the plastid. The protein resides in the chloroplast. The enzyme catalyses IMP + L-aspartate + GTP = N(6)-(1,2-dicarboxyethyl)-AMP + GDP + phosphate + 2 H(+). Its pathway is purine metabolism; AMP biosynthesis via de novo pathway; AMP from IMP: step 1/2. Plays an important role in the de novo pathway and in the salvage pathway of purine nucleotide biosynthesis. Catalyzes the first committed step in the biosynthesis of AMP from IMP. The polypeptide is Adenylosuccinate synthetase 2, chloroplastic (Physcomitrium patens (Spreading-leaved earth moss)).